The primary structure comprises 181 residues: MTVFEGNFTEDISSLRFAIVIGRFNDLVTDKLLSGCQDCLKRHGVDVNPDGTQVDYIWVPGSFEVPMVARQVALSHRYDAVICLGAIIRGQTPHFDYVAAEAAKGIAAAAFQTGVPVVFGILTTDTLQQALERAGIKSNLGWNYGLSALEMASLMRQLRPRNEDKPLELLENNPQQALMEG.

5-amino-6-(D-ribitylamino)uracil-binding positions include phenylalanine 24, serine 62 to glutamate 64, and alanine 86 to isoleucine 88. Glutamine 91–threonine 92 provides a ligand contact to (2S)-2-hydroxy-3-oxobutyl phosphate. Residue histidine 94 is the Proton donor of the active site. A 5-amino-6-(D-ribitylamino)uracil-binding site is contributed by phenylalanine 119. A (2S)-2-hydroxy-3-oxobutyl phosphate-binding site is contributed by arginine 133.

The protein belongs to the DMRL synthase family.

It catalyses the reaction (2S)-2-hydroxy-3-oxobutyl phosphate + 5-amino-6-(D-ribitylamino)uracil = 6,7-dimethyl-8-(1-D-ribityl)lumazine + phosphate + 2 H2O + H(+). It participates in cofactor biosynthesis; riboflavin biosynthesis; riboflavin from 2-hydroxy-3-oxobutyl phosphate and 5-amino-6-(D-ribitylamino)uracil: step 1/2. Catalyzes the formation of 6,7-dimethyl-8-ribityllumazine by condensation of 5-amino-6-(D-ribitylamino)uracil with 3,4-dihydroxy-2-butanone 4-phosphate. This is the penultimate step in the biosynthesis of riboflavin. In Microcystis aeruginosa (strain NIES-843 / IAM M-2473), this protein is 6,7-dimethyl-8-ribityllumazine synthase.